Consider the following 101-residue polypeptide: Small ribosomal subunit protein uS14 (101 aa).

Belongs to the universal ribosomal protein uS14 family. As to quaternary structure, part of the 30S ribosomal subunit. Contacts proteins S3 and S10.

Its function is as follows. Binds 16S rRNA, required for the assembly of 30S particles and may also be responsible for determining the conformation of the 16S rRNA at the A site. In Janthinobacterium sp. (strain Marseille) (Minibacterium massiliensis), this protein is Small ribosomal subunit protein uS14.